We begin with the raw amino-acid sequence, 310 residues long: p-hydroxybenzoic acid efflux pump subunit AaeA (310 aa).

The helical transmembrane segment at 12-32 (AITVVLVILAFIAIFNAWVYY) threads the bilayer.

Belongs to the membrane fusion protein (MFP) (TC 8.A.1) family.

The protein localises to the cell inner membrane. In terms of biological role, forms an efflux pump with AaeB. This chain is p-hydroxybenzoic acid efflux pump subunit AaeA, found in Shigella sonnei (strain Ss046).